Reading from the N-terminus, the 615-residue chain is Ras association domain-containing protein 1 homolog (615 aa).

Disordered stretches follow at residues 1–29 (MLRSVVNNNDKAKESEQSVRVATDDPTYQ) and 69–89 (SDDEKMETSSTSSPQSEQSIG). Over residues 76–87 (TSSTSSPQSEQS) the composition is skewed to low complexity. Residues 164-214 (NHSFKTHSLLHPTWCDKCGDFIWGILKEALKCEHCNYTCHARCRDLVTLDC) form a Phorbol-ester/DAG-type zinc finger. The segment at 249–268 (PAMSSSTGSDKENGNGNSAG) is disordered. A compositionally biased stretch (polar residues) spans 251-268 (MSSSTGSDKENGNGNSAG). Residues 396 to 496 (KTTSLRTITS…RALVLQENDT (101 aa)) enclose the Ras-associating domain. Positions 498–545 (DILWDAFEIPELENFLRILGMEEKQYVFQTQQKYQQYRYHLDAELRQR) constitute an SARAH domain.

Interacts with rab-39 (GTP-bound form). Interacts (via SARAH domain) with cst-1; the interaction is required for the phosphorylation of cst-1. As to expression, expressed in the pharynx, epithelial cells, ciliated neurons in the head, body wall muscles, hypodermis, vulva, gonadal sheath cells, tail hypodermis and in coelomocytes. Expressed in the pharynx, neurons and vulva.

The protein localises to the cytoplasm. It is found in the cytoskeleton. In terms of biological role, involved in embryonic morphogenesis. Plays a role in the organization of apical filamentous actin in epithelial cells of the developing embryo. May play a role in let-60-mediated vulval development. May induce nuclear condensation. Positively regulates the oxidative stress response, and this may be in association with the small GTPase rab-39. Not required for muscle integrity. The protein is Ras association domain-containing protein 1 homolog of Caenorhabditis elegans.